A 142-amino-acid chain; its full sequence is Large ribosomal subunit protein uL11 (142 aa).

Belongs to the universal ribosomal protein uL11 family. As to quaternary structure, part of the ribosomal stalk of the 50S ribosomal subunit. Interacts with L10 and the large rRNA to form the base of the stalk. L10 forms an elongated spine to which L12 dimers bind in a sequential fashion forming a multimeric L10(L12)X complex. One or more lysine residues are methylated.

In terms of biological role, forms part of the ribosomal stalk which helps the ribosome interact with GTP-bound translation factors. The polypeptide is Large ribosomal subunit protein uL11 (Shewanella baltica (strain OS223)).